The sequence spans 240 residues: UDP-2,3-diacylglucosamine hydrolase (240 aa).

Aspartate 8, histidine 10, aspartate 41, asparagine 78, and histidine 113 together coordinate Mn(2+). Residue 78–79 (NR) participates in substrate binding. Substrate contacts are provided by aspartate 121, serine 159, asparagine 163, lysine 166, and histidine 194. The Mn(2+) site is built by histidine 194 and histidine 196.

The protein belongs to the LpxH family. Requires Mn(2+) as cofactor.

It localises to the cell inner membrane. It catalyses the reaction UDP-2-N,3-O-bis[(3R)-3-hydroxytetradecanoyl]-alpha-D-glucosamine + H2O = 2-N,3-O-bis[(3R)-3-hydroxytetradecanoyl]-alpha-D-glucosaminyl 1-phosphate + UMP + 2 H(+). It participates in glycolipid biosynthesis; lipid IV(A) biosynthesis; lipid IV(A) from (3R)-3-hydroxytetradecanoyl-[acyl-carrier-protein] and UDP-N-acetyl-alpha-D-glucosamine: step 4/6. In terms of biological role, hydrolyzes the pyrophosphate bond of UDP-2,3-diacylglucosamine to yield 2,3-diacylglucosamine 1-phosphate (lipid X) and UMP by catalyzing the attack of water at the alpha-P atom. Involved in the biosynthesis of lipid A, a phosphorylated glycolipid that anchors the lipopolysaccharide to the outer membrane of the cell. In Shewanella baltica (strain OS195), this protein is UDP-2,3-diacylglucosamine hydrolase.